We begin with the raw amino-acid sequence, 445 residues long: Cytochrome P450 monooxygenase penB (445 aa).

Cys-381 serves as a coordination point for heme.

Belongs to the cytochrome P450 family. The cofactor is heme.

The protein operates within secondary metabolite biosynthesis. It participates in alkaloid biosynthesis. It functions in the pathway mycotoxin biosynthesis. Functionally, cytochrome P450 monooxygenase; part of the gene cluster that mediates the biosynthesis of penigequinolones, potent insecticidal alkaloids that contain a highly modified 10-carbon prenyl group. The first stage is catalyzed by the nonribosomal peptide synthetase penN that condenses anthranilic acid and O-methyl-L-tyrosine to produce 4'-methoxycyclopeptin. 4'-methoxycyclopeptin is then converted to 4'-methoxydehydrocyclopeptin by the ketoglutarate-dependent dioxygenase penM through dehydrogenation to form a double bond between C-alpha and C-beta of the O-methyltyrosine side chain. PenM also converts its first product methoxydehydrocyclopeptin to 4'-methoxycyclopenin. The following conversion of 4'methoxycyclopenin into 4'-methoxyviridicatin is catalyzed by the cyclopenase penL. 4'-methoxyviridicatin is the precursor of quinolone natural products, and is further converted to quinolinone B. The prenyltransferase penI then catalyzes the canonical Friedel-Crafts alkylation of quinolinone B with dimethylallyl cation to yield dimethylallyl quinolone, which is subjected to FAD-dependent dehydrogenation by the FAD-linked oxidoreductase penH to yield conjugated aryl diene. The delta(3') double bond then serves as the site of the second alkylation with DMAPP catalyzed by the prenyltransferase penG to yield a carbenium ion intermediate, which can be attacked by H(2)O to yield a styrenyl quinolone containing a C3'-hydroxyprenyl chain, or undergo cyclization to yield yaequinolones J1 and J2. The conversion of the styrenyl quinolone into the tetrahydrofuran-containing yaequinolone C is performed by the FAD-dependent monooxygenase penE and involves epoxidation of the terminal C7'-C8' olefin, followed by epoxide ring opening initiated by the C3' hydroxyl group. The predicted cysteine hydrolase penJ acts as an epoxide hydrolase that enhances the rate of the 5-exo-tet cyclization step, increasing the yield of yaequinolone C. PenF catalyzes the cationic rearrangement of the epoxide formed by penE (before ring opening to produce yaequinolone C) into yaequinolone D. Finally, the short-chain dehydrogenase/reductase (SDR)-like reductase penD, catalyzes both the dehydration of yaequinolone D and the reduction of the resulting oxonium to yield penigequinolone. This is Cytochrome P450 monooxygenase penB from Penicillium thymicola.